A 520-amino-acid chain; its full sequence is GMP synthase [glutamine-hydrolyzing] (520 aa).

The Glutamine amidotransferase type-1 domain occupies 9–202; it reads KILILDFGSQ…VRQICGCTGQ (194 aa). Cys-86 (nucleophile) is an active-site residue. Residues His-176 and Glu-178 contribute to the active site. The GMPS ATP-PPase domain occupies 203–395; that stretch reads WTPGQIIEDA…LGLPHPMVYR (193 aa). Residue 230–236 participates in ATP binding; it reads SGGVDSS.

Homodimer.

It catalyses the reaction XMP + L-glutamine + ATP + H2O = GMP + L-glutamate + AMP + diphosphate + 2 H(+). Its pathway is purine metabolism; GMP biosynthesis; GMP from XMP (L-Gln route): step 1/1. In terms of biological role, catalyzes the synthesis of GMP from XMP. This is GMP synthase [glutamine-hydrolyzing] from Syntrophotalea carbinolica (strain DSM 2380 / NBRC 103641 / GraBd1) (Pelobacter carbinolicus).